The primary structure comprises 740 residues: ATP-dependent RNA helicase DDX1 (740 aa).

Positions 1 to 295 (MAAFSEMGVM…APKALIVEPS (295 aa)) are necessary for interaction with HNRNPK. The interaction with dsRNA stretch occupies residues 1 to 448 (MAAFSEMGVM…DTVHHVVVPV (448 aa)). Positions 1–525 (MAAFSEMGVM…KIDCDNLEQY (525 aa)) are necessary for interaction with RELA. The region spanning 2–428 (AAFSEMGVMP…SEKIMHFPTW (427 aa)) is the Helicase ATP-binding domain. 46–53 (AETGSGKT) serves as a coordination point for ATP. Positions 70-247 (DQQEGKKGKA…LKFNFGEEEF (178 aa)) constitute a B30.2/SPRY domain. An N6-acetyllysine mark is found at K239 and K268. Residue K281 is modified to N6-acetyllysine; alternate. Residue K281 forms a Glycyl lysine isopeptide (Lys-Gly) (interchain with G-Cter in SUMO2); alternate linkage. A DEAD box motif is present at residues 370–373 (DEAD). S481 carries the post-translational modification Phosphoserine. The Helicase C-terminal domain maps to 493-681 (KGEYAVRAIK…QVEPDIKVPV (189 aa)). The segment at 525-740 (YFMQQGGGPD…YLPNQLFRTF (216 aa)) is necessary for interaction with HNRNPK.

It belongs to the DEAD box helicase family. DDX1 subfamily. As to quaternary structure, found in a multi-helicase-TICAM1 complex at least composed of DHX36, DDX1, DDX21 and TICAM1; this complex exists in resting cells with or without poly(I:C) RNA ligand stimulation. Interacts with DHX36. Interacts (via B30.2/SPRY domain) with DDX21 (via N-terminus); this interaction serves as bridges to TICAM1. Interacts with FAM98A (via N- and C-terminus). Interacts with PHF5A (via C-terminus). Interacts with MBNL1. Interacts with CSTF2. Interacts with HNRNPK. Interacts with ATM. Interacts with RELA (via C-terminus). Component of the tRNA-splicing ligase complex. Interacts with PQBP1. Interacts with ERCC6. Phosphorylated by ATM kinase; phosphorylation is increased in response to ionizing radiation (IR).

It is found in the nucleus. It localises to the cytoplasm. The protein localises to the cytoplasmic granule. The protein resides in the cytosol. Its subcellular location is the mitochondrion. The enzyme catalyses ATP + H2O = ADP + phosphate + H(+). Functionally, acts as an ATP-dependent RNA helicase, able to unwind both RNA-RNA and RNA-DNA duplexes. Possesses 5' single-stranded RNA overhang nuclease activity. Possesses ATPase activity on various RNA, but not DNA polynucleotides. May play a role in RNA clearance at DNA double-strand breaks (DSBs), thereby facilitating the template-guided repair of transcriptionally active regions of the genome. Together with RELA, acts as a coactivator to enhance NF-kappa-B-mediated transcriptional activation. Acts as a positive transcriptional regulator of cyclin CCND2 expression. Binds to the cyclin CCND2 promoter region. Associates with chromatin at the NF-kappa-B promoter region via association with RELA. Binds to poly(A) RNA. May be involved in 3'-end cleavage and polyadenylation of pre-mRNAs. Component of the tRNA-splicing ligase complex required to facilitate the enzymatic turnover of catalytic subunit RTCB: together with archease (ZBTB8OS), acts by facilitating the guanylylation of RTCB, a key intermediate step in tRNA ligation. Component of a multi-helicase-TICAM1 complex that acts as a cytoplasmic sensor of viral double-stranded RNA (dsRNA) and plays a role in the activation of a cascade of antiviral responses including the induction of pro-inflammatory cytokines via the adapter molecule TICAM1. Specifically binds (via helicase ATP-binding domain) on both short and long poly(I:C) dsRNA. This chain is ATP-dependent RNA helicase DDX1 (Ddx1), found in Rattus norvegicus (Rat).